The chain runs to 120 residues: Large ribosomal subunit protein uL18 (120 aa).

A compositionally biased stretch (basic and acidic residues) spans 1 to 10 (MKRTRTESVQ). Residues 1–24 (MKRTRTESVQRRHSRIRRKVEGTP) form a disordered region.

Belongs to the universal ribosomal protein uL18 family. As to quaternary structure, part of the 50S ribosomal subunit; part of the 5S rRNA/L5/L18/L25 subcomplex. Contacts the 5S and 23S rRNAs.

In terms of biological role, this is one of the proteins that bind and probably mediate the attachment of the 5S RNA into the large ribosomal subunit, where it forms part of the central protuberance. The sequence is that of Large ribosomal subunit protein uL18 from Gloeothece citriformis (strain PCC 7424) (Cyanothece sp. (strain PCC 7424)).